The primary structure comprises 327 residues: Cytochrome f (327 aa).

Positions 1 to 24 (MKRIGLVFCALLLLLGMGARPAAA) are cleaved as a signal peptide. Heme-binding residues include Tyr-25, Cys-45, Cys-48, and His-49. A helical membrane pass occupies residues 293 to 313 (VKWLVAFLAAITITQVLLVLK).

The protein belongs to the cytochrome f family. In terms of assembly, the 4 large subunits of the cytochrome b6-f complex are cytochrome b6, subunit IV (17 kDa polypeptide, PetD), cytochrome f and the Rieske protein, while the 4 small subunits are PetG, PetL, PetM and PetN. The complex functions as a dimer. It depends on heme as a cofactor.

The protein resides in the cellular thylakoid membrane. Its function is as follows. Component of the cytochrome b6-f complex, which mediates electron transfer between photosystem II (PSII) and photosystem I (PSI), cyclic electron flow around PSI, and state transitions. The polypeptide is Cytochrome f (Synechococcus sp. (strain JA-2-3B'a(2-13)) (Cyanobacteria bacterium Yellowstone B-Prime)).